Reading from the N-terminus, the 628-residue chain is Chaperone protein HtpG (628 aa).

The segment at 1–334 is a; substrate-binding; that stretch reads MTTTDTASET…SEDLPLNLSR (334 aa). The b stretch occupies residues 335-550; it reads EMLQNNPQLA…GFGPDRELEK (216 aa). The interval 551–628 is c; the sequence is MLARANKGAA…LVLRGLVAHG (78 aa).

The protein belongs to the heat shock protein 90 family. As to quaternary structure, homodimer.

It is found in the cytoplasm. Its function is as follows. Molecular chaperone. Has ATPase activity. This chain is Chaperone protein HtpG, found in Rhodopseudomonas palustris (strain BisB5).